The sequence spans 531 residues: MSEVPPTDEGWFVLHDFRTVDWDAWREAPTHRREAAVGDGVEYLRKHESIADAEEGSSAVFSVLGHKADILITHFRPTLDALSRAERQFEQTTFAGFTTQPTSYVSVAEISGYTTPGYFENPDAADEGLRQYMQGKLTPEIPNKDYAGFYPMSKRRGETYNWYDLPIDERAEMMEAHAETGKEYAGKIKQVIASSVGFDDYEWGVTLFADDPTDIKDIVYEMRFDEVSAKYGEFGTFYIGQRFPPADLGALLEGKAIPTVEQDVDAPTAHGEAHGHAHGDSPHGSGGGGGSSHGQSPGGASAGGSAHGTEDADHSDSRSTTSADTTQSDTSTNTNTQDSEIREQLAEYDIYAGQPHGEDVYATVLYSEATTDELFSEVEGLRGNFDHYGTHVKTAVYEARNRHRNAVVSIWETQSAAETAAGFISELPDVVSRAGEESGFGTMGMFYTVKSEYRGEFNDTFDTVGGILTEMDGHQQTDLMINLEDENDMFISSQWDAREDAMSFFRSDEFSETVEWGRDVLSERPRHVFLA.

His177 is a binding site for heme. Residues 269–340 are disordered; sequence AHGEAHGHAH…STNTNTQDSE (72 aa). Basic and acidic residues predominate over residues 271 to 281; sequence GEAHGHAHGDS. Positions 284–306 are enriched in gly residues; it reads GSGGGGGSSHGQSPGGASAGGSA. Positions 308–317 are enriched in basic and acidic residues; that stretch reads GTEDADHSDS. Positions 318–338 are enriched in low complexity; the sequence is RSTTSADTTQSDTSTNTNTQD. In terms of domain architecture, ABM spans 441–529; it reads GTMGMFYTVK…VLSERPRHVF (89 aa).

The protein in the N-terminal section; belongs to the ChdC family.

The chain is Putative heme-binding protein HQ_1094A from Haloquadratum walsbyi (strain DSM 16790 / HBSQ001).